We begin with the raw amino-acid sequence, 379 residues long: Dual-specificity RNA methyltransferase RlmN (379 aa).

The active-site Proton acceptor is E95. A Radical SAM core domain is found at 101–345; the sequence is EETRGTLCVS…TTVRKTRGDD (245 aa). Residues C108 and C350 are joined by a disulfide bond. [4Fe-4S] cluster is bound by residues C115, C119, and C122. S-adenosyl-L-methionine contacts are provided by residues 176–177, S208, 230–232, and N307; these read GE and SLH. Catalysis depends on C350, which acts as the S-methylcysteine intermediate.

Belongs to the radical SAM superfamily. RlmN family. Requires [4Fe-4S] cluster as cofactor.

The protein resides in the cytoplasm. The enzyme catalyses adenosine(2503) in 23S rRNA + 2 reduced [2Fe-2S]-[ferredoxin] + 2 S-adenosyl-L-methionine = 2-methyladenosine(2503) in 23S rRNA + 5'-deoxyadenosine + L-methionine + 2 oxidized [2Fe-2S]-[ferredoxin] + S-adenosyl-L-homocysteine. It carries out the reaction adenosine(37) in tRNA + 2 reduced [2Fe-2S]-[ferredoxin] + 2 S-adenosyl-L-methionine = 2-methyladenosine(37) in tRNA + 5'-deoxyadenosine + L-methionine + 2 oxidized [2Fe-2S]-[ferredoxin] + S-adenosyl-L-homocysteine. Its function is as follows. Specifically methylates position 2 of adenine 2503 in 23S rRNA and position 2 of adenine 37 in tRNAs. m2A2503 modification seems to play a crucial role in the proofreading step occurring at the peptidyl transferase center and thus would serve to optimize ribosomal fidelity. This Burkholderia ambifaria (strain MC40-6) protein is Dual-specificity RNA methyltransferase RlmN.